The following is a 346-amino-acid chain: Prepilin peptidase EppA (346 aa).

Helical transmembrane passes span 1–21 (MFGFDNLILGVYLFNFLLILT), 31–51 (IIPHFVIILMLIVNLPIGYYF), 56–76 (AITSFFATLILCLILGVGMGG), 77–97 (GDVKMFTALSPLFAAETIYFV), 101–121 (ISILIGLSALFAAIFPMTKIL), 128–148 (IIPSSAYLAMLIGIIVSITEI), 149–169 (YSIGNTKTILWSYIILSIFIS), 182–202 (LGYITPIYLIGFYLLNPAYFV), 206–226 (VLISFFVYIGQLSLISLVIYA), and 321–341 (PFVPFVLVAYCVITLLNMGVI).

The protein belongs to the peptidase A24 family.

Its subcellular location is the cell membrane. Its function is as follows. Peptidase that processes the N-terminus of prepilins. Specifically cleaves proteins with a class III (type IV pilin-like) signal sequence, such as the major structural pilin EpdE and the minor pilins EpdA, EpdC and EpdD. Is not able to cleave the preflagellin subunit FlaB2. This chain is Prepilin peptidase EppA, found in Methanococcus maripaludis (strain DSM 14266 / JCM 13030 / NBRC 101832 / S2 / LL).